The primary structure comprises 1203 residues: ATP-dependent helicase/nuclease subunit A (1203 aa).

Positions 4–472 (VKLTPEQNEA…IRLKENFRSR (469 aa)) constitute a UvrD-like helicase ATP-binding domain. 25-32 (ASAGSGKT) contributes to the ATP binding site. Residues 503 to 785 (VQGNITDYPV…RVMTFHKSKG (283 aa)) form the UvrD-like helicase C-terminal domain.

It belongs to the helicase family. AddA subfamily. In terms of assembly, heterodimer of AddA and AddB/RexB. The cofactor is Mg(2+).

It catalyses the reaction Couples ATP hydrolysis with the unwinding of duplex DNA by translocating in the 3'-5' direction.. It carries out the reaction ATP + H2O = ADP + phosphate + H(+). Its function is as follows. The heterodimer acts as both an ATP-dependent DNA helicase and an ATP-dependent, dual-direction single-stranded exonuclease. Recognizes the chi site generating a DNA molecule suitable for the initiation of homologous recombination. The AddA nuclease domain is required for chi fragment generation; this subunit has the helicase and 3' -&gt; 5' nuclease activities. This is ATP-dependent helicase/nuclease subunit A from Lactococcus lactis subsp. lactis (strain IL1403) (Streptococcus lactis).